We begin with the raw amino-acid sequence, 384 residues long: 4-hydroxy-3-methylbut-2-en-1-yl diphosphate synthase (flavodoxin) (384 aa).

[4Fe-4S] cluster-binding residues include cysteine 280, cysteine 283, cysteine 315, and glutamate 322.

Belongs to the IspG family. It depends on [4Fe-4S] cluster as a cofactor.

The catalysed reaction is (2E)-4-hydroxy-3-methylbut-2-enyl diphosphate + oxidized [flavodoxin] + H2O + 2 H(+) = 2-C-methyl-D-erythritol 2,4-cyclic diphosphate + reduced [flavodoxin]. Its pathway is isoprenoid biosynthesis; isopentenyl diphosphate biosynthesis via DXP pathway; isopentenyl diphosphate from 1-deoxy-D-xylulose 5-phosphate: step 5/6. Its function is as follows. Converts 2C-methyl-D-erythritol 2,4-cyclodiphosphate (ME-2,4cPP) into 1-hydroxy-2-methyl-2-(E)-butenyl 4-diphosphate. This chain is 4-hydroxy-3-methylbut-2-en-1-yl diphosphate synthase (flavodoxin), found in Parafrankia sp. (strain EAN1pec).